The chain runs to 138 residues: Putative pre-16S rRNA nuclease (138 aa).

Belongs to the YqgF nuclease family.

It is found in the cytoplasm. Its function is as follows. Could be a nuclease involved in processing of the 5'-end of pre-16S rRNA. This is Putative pre-16S rRNA nuclease from Haemophilus ducreyi (strain 35000HP / ATCC 700724).